We begin with the raw amino-acid sequence, 772 residues long: Alpha-xylosidase (772 aa).

Residue aspartate 416 is the Nucleophile of the active site. The active site involves glutamate 419. Aspartate 482 acts as the Proton donor in catalysis.

This sequence belongs to the glycosyl hydrolase 31 family. Homohexamer.

It carries out the reaction Hydrolysis of terminal, non-reducing alpha-D-xylose residues with release of alpha-D-xylose.. Its function is as follows. Can catalyze the transfer of alpha-xylosyl residue from alpha-xyloside to xylose, glucose, mannose, fructose, maltose, isomaltose, nigerose, kojibiose, sucrose and trehalose. This Escherichia coli (strain K12) protein is Alpha-xylosidase (yicI).